The sequence spans 604 residues: Probable translation initiation factor IF-2 (604 aa).

The 215-residue stretch at 18-232 (IRTPIVCVLG…VLIGLAQRYM (215 aa)) folds into the tr-type G domain. The segment at 27–34 (GHVDHGKT) is G1. Residue 27–34 (GHVDHGKT) participates in GTP binding. The tract at residues 52 to 56 (AITQH) is G2. The G3 stretch occupies residues 88–91 (DTPG). GTP-binding positions include 88–92 (DTPGH) and 142–145 (TKLD). The tract at residues 142 to 145 (TKLD) is G4. The segment at 210–212 (SAH) is G5.

It belongs to the TRAFAC class translation factor GTPase superfamily. Classic translation factor GTPase family. IF-2 subfamily.

Its function is as follows. Function in general translation initiation by promoting the binding of the formylmethionine-tRNA to ribosomes. Seems to function along with eIF-2. The polypeptide is Probable translation initiation factor IF-2 (Methanospirillum hungatei JF-1 (strain ATCC 27890 / DSM 864 / NBRC 100397 / JF-1)).